A 108-amino-acid chain; its full sequence is ATP-dependent Clp protease adapter protein ClpS (108 aa).

Positions 1-10 (MADSDKHGDE) are enriched in basic and acidic residues. The interval 1–21 (MADSDKHGDEGPSTGVVVKAK) is disordered.

The protein belongs to the ClpS family. Binds to the N-terminal domain of the chaperone ClpA.

Functionally, involved in the modulation of the specificity of the ClpAP-mediated ATP-dependent protein degradation. This is ATP-dependent Clp protease adapter protein ClpS from Rhodospirillum centenum (strain ATCC 51521 / SW).